The following is a 981-amino-acid chain: Rab3 GTPase-activating protein catalytic subunit (981 aa).

Residues Ser-83, Ser-379, Ser-536, Ser-579, Ser-581, and Ser-590 each carry the phosphoserine modification. The disordered stretch occupies residues 532–558 (GKKTSLSDSTTSAYPGDAGKTGGQLGL). The tract at residues 591–614 (DTEDLKGNGQESGKKGGPKEMANL) is disordered. Ser-664 carries the phosphoserine modification.

The protein belongs to the Rab3-GAP catalytic subunit family. The Rab3 GTPase-activating complex is a heterodimer composed of Rab3gap1 and Rab3gap2. The Rab3 GTPase-activating complex interacts with DMXL2. Interacts with LMAN1. As to expression, in the eye, it is highly expressed within the lens, particularly in the anterior lens epithelium and in a ring corresponding to the equatorial region where anterior cells are differentiating into lens fibers. Also highly expressed in the retina.

It localises to the cytoplasm. It is found in the endoplasmic reticulum. Its subcellular location is the golgi apparatus. The protein resides in the cis-Golgi network. Its function is as follows. Catalytic subunit of the Rab3 GTPase-activating (Rab3GAP) complex composed of RAB3GAP1 and RAB3GAP2, which has GTPase-activating protein (GAP) activity towards various Rab3 subfamily members (RAB3A, RAB3B, RAB3C and RAB3D), RAB5A and RAB43, and guanine nucleotide exchange factor (GEF) activity towards RAB18. As part of the Rab3GAP complex, acts as a GAP for Rab3 proteins by converting active RAB3-GTP to the inactive form RAB3-GDP. Rab3 proteins are involved in regulated exocytosis of neurotransmitters and hormones. The Rab3GAP complex, acts as a GEF for RAB18 by promoting the conversion of inactive RAB18-GDP to the active form RAB18-GTP. Recruits and stabilizes RAB18 at the cis-Golgi membrane where RAB18 is most likely activated. Also involved in RAB18 recruitment at the endoplasmic reticulum (ER) membrane where it maintains proper ER structure. Required for normal eye and brain development. May participate in neurodevelopmental processes such as proliferation, migration and differentiation before synapse formation, and non-synaptic vesicular release of neurotransmitters. This is Rab3 GTPase-activating protein catalytic subunit from Mus musculus (Mouse).